Reading from the N-terminus, the 1033-residue chain is Translation initiation factor IF-2 (1033 aa).

The disordered stretch occupies residues 49–432; it reads AFQQGGGNGR…APSVGGVMLP (384 aa). The span at 59 to 113 shows a compositional bias: low complexity; it reads SAGRPAAPKKAAPRPSAPSPAQAGPSQAAPAAGDRAAAPRPSAAPKAPAAQQPAA. 2 stretches are compositionally biased toward pro residues: residues 114–140 and 148–164; these read PSAP…PAPA and PAAP…PSGP. Low complexity predominate over residues 171–189; that stretch reads PGAPKPGGARPSGPGQDRG. The segment covering 190 to 201 has biased composition (gly residues); that stretch reads QQGGQGRPGGQR. The span at 236 to 246 shows a compositional bias: pro residues; sequence APRPQGGPRPG. The segment covering 247 to 268 has biased composition (gly residues); sequence GPGGAPGGGPRPQGPGGQGGGP. A compositionally biased stretch (low complexity) spans 305–314; that stretch reads MMPQRPAAGP. Residues 318-401 show a composition bias toward gly residues; sequence PGGGGRGPGG…GTQGAFGRPG (84 aa). The span at 405–414 shows a compositional bias: basic residues; that stretch reads RRGRKSKRQR. Residues 526 to 698 form the tr-type G domain; it reads VRPPVVTVMG…VVLTADASLD (173 aa). The tract at residues 535 to 542 is G1; the sequence is GHVDHGKT. Residue 535–542 coordinates GTP; the sequence is GHVDHGKT. Positions 560–564 are G2; that stretch reads GITQH. Positions 585 to 588 are G3; that stretch reads DTPG. GTP-binding positions include 585–589 and 639–642; these read DTPGH and NKID. A G4 region spans residues 639 to 642; that stretch reads NKID. A G5 region spans residues 675–677; sequence SAK.

Belongs to the TRAFAC class translation factor GTPase superfamily. Classic translation factor GTPase family. IF-2 subfamily.

The protein resides in the cytoplasm. One of the essential components for the initiation of protein synthesis. Protects formylmethionyl-tRNA from spontaneous hydrolysis and promotes its binding to the 30S ribosomal subunits. Also involved in the hydrolysis of GTP during the formation of the 70S ribosomal complex. This is Translation initiation factor IF-2 from Streptomyces coelicolor (strain ATCC BAA-471 / A3(2) / M145).